The following is a 261-amino-acid chain: Rhomboid-type serine protease 2 (261 aa).

5 consecutive transmembrane segments (helical) span residues L17 to I37, L58 to V78, I94 to L114, P116 to V136, and L155 to V175. S124 serves as the catalytic Nucleophile. Residue H177 is part of the active site.

Belongs to the peptidase S54 family.

The protein resides in the golgi apparatus membrane. The protein localises to the golgi apparatus. It localises to the cis-Golgi network membrane. The enzyme catalyses Cleaves type-1 transmembrane domains using a catalytic dyad composed of serine and histidine that are contributed by different transmembrane domains.. Its function is as follows. Probable rhomboid-type serine protease that catalyzes intramembrane proteolysis. The sequence is that of Rhomboid-type serine protease 2 (RBD2) from Eremothecium gossypii (strain ATCC 10895 / CBS 109.51 / FGSC 9923 / NRRL Y-1056) (Yeast).